The chain runs to 87 residues: UPF0250 protein KPN78578_06520 (87 aa).

It belongs to the UPF0250 family.

The polypeptide is UPF0250 protein KPN78578_06520 (Klebsiella pneumoniae subsp. pneumoniae (strain ATCC 700721 / MGH 78578)).